The sequence spans 291 residues: Kynurenine formamidase (291 aa).

The short motif at H33–W37 is the HGGXW element. S107 functions as the Nucleophile in the catalytic mechanism. Residues D242 and H280 contribute to the active site.

It belongs to the kynurenine formamidase family. Homodimer.

The catalysed reaction is N-formyl-L-kynurenine + H2O = L-kynurenine + formate + H(+). It functions in the pathway amino-acid degradation; L-tryptophan degradation via kynurenine pathway; L-kynurenine from L-tryptophan: step 2/2. Catalyzes the hydrolysis of N-formyl-L-kynurenine to L-kynurenine, the second step in the kynurenine pathway of tryptophan degradation. Kynurenine may be further oxidized to nicotinic acid, NAD(H) and NADP(H). Required for elimination of toxic metabolites. The chain is Kynurenine formamidase from Debaryomyces hansenii (strain ATCC 36239 / CBS 767 / BCRC 21394 / JCM 1990 / NBRC 0083 / IGC 2968) (Yeast).